Reading from the N-terminus, the 694-residue chain is Nucleolin (694 aa).

The tract at residues 1–277 (MVKLAKTPKN…EAKKKKTETP (277 aa)) is disordered. Positions 26–40 (ESEEEESSDLEESSG) are enriched in acidic residues. Residues 46–108 (PPKKQQKAAV…AVVGKGAKNG (63 aa)) are compositionally biased toward low complexity. 5 consecutive repeat copies span residues 55–61 (VTPAKKA), 62–68 (ATPAKKA), 69–75 (ATPAKKA), 76–82 (VTPAKKA), and 84–90 (ATPAKKA). Residues 55–90 (VTPAKKAATPAKKAATPAKKAVTPAKKAVATPAKKA) form a 5 X 7 AA tandem repeats of X-T-P-X-K-K-X region. 2 positions are modified to phosphoserine: S116 and S136. The span at 116–142 (SEEEDEDDEDDEEDEDEEEESDEEEEP) shows a compositional bias: acidic residues. Residues 143-168 (AVPVKPAAKKSAAAVPAKKPAVVPAK) show a composition bias toward low complexity. At S171 the chain carries Phosphoserine. Residues 171–194 (SEEEEEEDDEEEDEEDDESEDEAM) are compositionally biased toward acidic residues. The segment covering 196 to 213 (TTPAPVKKPTPAKATPAK) has biased composition (low complexity). The span at 218 to 246 (SEDEEDEEDEDEDEEDEDDEEEDEEESED) shows a compositional bias: acidic residues. 4 RRM domains span residues 281-357 (FSLF…KAKS), 371-445 (RTLF…YTGE), 461-535 (KTLI…FSSP), and 553-628 (KTLF…FAKP). A disordered region spans residues 631–694 (EFQRGGGFGG…KPQGKKIKFE (64 aa)). A compositionally biased stretch (gly residues) spans 633–680 (QRGGGFGGGFGGRGGRGGRGGGRGGFGGRGGGRGFGGRGGGFRGGRGG). Over residues 681 to 694 (GGDHKPQGKKIKFE) the composition is skewed to basic and acidic residues.

Highly phosphorylated during mitosis.

It localises to the nucleus. The protein resides in the nucleolus. Its function is as follows. Nucleolin is the major nucleolar protein of growing eukaryotic cells. It is found associated with intranucleolar chromatin and pre-ribosomal particles. It induces chromatin decondensation by binding to histone H1. It is thought to play a role in pre-rRNA transcription and ribosome assembly. The polypeptide is Nucleolin (NCL) (Gallus gallus (Chicken)).